A 103-amino-acid polypeptide reads, in one-letter code: Small ribosomal subunit protein uS10 (103 aa).

The protein belongs to the universal ribosomal protein uS10 family. In terms of assembly, part of the 30S ribosomal subunit.

In terms of biological role, involved in the binding of tRNA to the ribosomes. In Saccharophagus degradans (strain 2-40 / ATCC 43961 / DSM 17024), this protein is Small ribosomal subunit protein uS10.